Consider the following 166-residue polypeptide: uncharacterized protein (166 aa).

An HTH asnC-type domain is found at 3–65; the sequence is LTEKETEILE…IDWRKVDGHE (63 aa). The segment at residues 22-41 is a DNA-binding region (H-T-H motif); that stretch reads LETIAKMAGIPVNEVKTIID.

This is an uncharacterized protein from Bacillus subtilis (strain 168).